Consider the following 393-residue polypeptide: METFLFTSESVNEGHPDKLCDQISDAVLDACLEQDPDSKVACETCTKTNMVMVFGEITTKATVDYEKIVRDTCRAIGFVSDDVGLDADKCKVLVNIEQQSPDIAQGVHGHFTKCPEEIGAGDQGHMFGYATDETPELMPLSHVLATKLGARLTEVRKNGTCAWLRPDGKTQVTVEYYNDKGAMVPIRVHTVLISTQHDETVTNDEIARDLKEHVIKPVIPEKYLDEKTIFHLNPSGRFVIGGPHGDAGLTGRKIIIDTYGGWGAHGGGAFSGKDPTKVDRSGAYIVRQAAKSVVANGMARRALVQVSYAIGVPEPLSVFVDTYETGLIPDKEILKIVKESFDFRPGMMTINLDLKRGGNGRFLKTAAYGHFGRDDPDFTWEVVKPLKWDKPQA.

Glu9 is a Mg(2+) binding site. His15 contacts ATP. Glu43 is a K(+) binding site. The L-methionine site is built by Glu56 and Gln99. Cys114 is modified (S-nitrosocysteine). Residues 167–169 (DGK), 235–238 (SGRF), Asp246, 252–253 (RK), Ala269, Lys273, and Lys277 contribute to the ATP site. Residue Asp246 participates in L-methionine binding. L-methionine is bound at residue Lys277.

This sequence belongs to the AdoMet synthase family. In terms of assembly, homotetramer. Interacts with GRF3. The cofactor is Mn(2+). Mg(2+) is required as a cofactor. Co(2+) serves as cofactor. It depends on K(+) as a cofactor. In terms of processing, S-nitrosylated in the presence of NO. The inhibition of SAM1 activity by S-nitrosylation could contribute to the cross-talk between ethylene and NO signaling. Highly expressed in stems and roots.

Its subcellular location is the cytoplasm. The enzyme catalyses L-methionine + ATP + H2O = S-adenosyl-L-methionine + phosphate + diphosphate. Its pathway is amino-acid biosynthesis; S-adenosyl-L-methionine biosynthesis; S-adenosyl-L-methionine from L-methionine: step 1/1. With respect to regulation, reversibly inhibited by NO. Inhibited by 5,5'-dithiobis-2-nitrobenzoic acid (DTNB) and N-ethylmaleimide (NEM) (in vitro). Its function is as follows. Catalyzes the formation of S-adenosylmethionine from methionine and ATP. The reaction comprises two steps that are both catalyzed by the same enzyme: formation of S-adenosylmethionine (AdoMet) and triphosphate, and subsequent hydrolysis of the triphosphate. In Arabidopsis thaliana (Mouse-ear cress), this protein is S-adenosylmethionine synthase 1 (SAM1).